The sequence spans 193 residues: Ribonuclease HII (193 aa).

The RNase H type-2 domain maps to 15–193 (CIVAGIDEAG…PYHRRSFRCC (179 aa)). Positions 21, 22, and 112 each coordinate a divalent metal cation.

Belongs to the RNase HII family. Mn(2+) is required as a cofactor. Requires Mg(2+) as cofactor.

It is found in the cytoplasm. The enzyme catalyses Endonucleolytic cleavage to 5'-phosphomonoester.. In terms of biological role, endonuclease that specifically degrades the RNA of RNA-DNA hybrids. This chain is Ribonuclease HII, found in Rickettsia africae (strain ESF-5).